A 308-amino-acid chain; its full sequence is MNLMDIAKIFSLLQPEKEEEDTGTGEKQALNQAVYDNDSCTLDHLLHQERYKRFINSRSGWGIPGTPLRLAASYGHLNCVKVLLEHGADVDSLDVKAQTPLFTAVSHGHLECVRMLLEAGACPSGSIYNNCSPVLTASRDGAFAILQELLGHGAEANVKAKLPVWASNIASCSGPLYLAAVYGHLDCFRLLLLYGADPDYNCTDQGLLSRVPQPRTLLEICLHHNCEPEYIQLLIDFGANIYLPSLPVDPTSQDDKGIKLLLQARATPRSLLSQTRLVIRRSLCRANQSQATDQLDIPPVLISYLKHQ.

ANK repeat units follow at residues 63-92, 96-125, 129-158, 171-200, and 213-243; these read IPGT…DVDS, KAQT…CPSG, NNCS…EANV, SCSG…DPDY, and QPRT…NIYL. One can recognise an SOCS box domain in the interval 268–308; it reads PRSLLSQTRLVIRRSLCRANQSQATDQLDIPPVLISYLKHQ.

It belongs to the ankyrin SOCS box (ASB) family. As to quaternary structure, interacts with CUL5 and RNF7.

It functions in the pathway protein modification; protein ubiquitination. Its function is as follows. Probable substrate-recognition component of a SCF-like ECS (Elongin-Cullin-SOCS-box protein) E3 ubiquitin-protein ligase complex which mediates the ubiquitination and subsequent proteasomal degradation of target proteins. In Mus musculus (Mouse), this protein is Ankyrin repeat and SOCS box protein 12 (Asb12).